We begin with the raw amino-acid sequence, 118 residues long: Large ribosomal subunit protein bL20 (118 aa).

The protein belongs to the bacterial ribosomal protein bL20 family.

Binds directly to 23S ribosomal RNA and is necessary for the in vitro assembly process of the 50S ribosomal subunit. It is not involved in the protein synthesizing functions of that subunit. This chain is Large ribosomal subunit protein bL20, found in Nostoc punctiforme (strain ATCC 29133 / PCC 73102).